A 681-amino-acid polypeptide reads, in one-letter code: MMEKGIWKDALIQSTKKLSPKLQLKNPVMLLVYVGAILATSLYFLGFFGISDEKSGYTLAIALILWFTVLFANFAEAIAEGRGRAQADSLKMARKDVLARKLKNIDDKTDVIEIASNDLKKGDIVYVLANEQIPMDGEVIEGAASVDESAITGESAPVIRESGGDRSAVTGGTTLVSDWLVVRVTAVSGESFLDKMIAMVEGASRKKTPNEIALQILLVTLSIIFLTVSATLLPFTEFASKQAGAGSAISITNVIALLVCLAPTTIGALLSSIGIAGMSRLNQANVLAMSGRAIEAAGDVDVLLLDKTGTITLGNRKASEFLPVDGVTEQELADAAQLSSIADETAEGRSIVVLAKERFDIRGRDFAEMHAEFVPFTATTRMSGIDYQENTIRKGAADAVRAYVTANGGTYPKECDAIVSKVAGAGGTPLVVVRNNKVLGVIYLKDIVKNGVKERFLDLRKMGIKTIMITGDNPMTAAAIAAEAGVDDFLAEATPEAKLELIREYQREGHLVAMTGDGTNDAPALAQADVAVAMNTGTQAAKEAGNMVDLDSSPTKLIDIVRIGKQLLMTRGALTTFSVANDLAKYFAIIPVLFYGIFPQLEALNLMGLTSPTSAILSAIIYNAVIIIILIPLSLKGVKYREMPAGKLLSRNMLIYGLGGLIAPFIAIKLIDMLLTVLGIV.

4 helical membrane passes run Leu-30–Ile-50, Leu-59–Ala-79, Ile-216–Thr-236, and Ile-255–Ile-275. Residue Asp-306 is the 4-aspartylphosphate intermediate of the active site. Residues Asp-343, Glu-347, Phe-376–Ser-383, and Lys-394 each bind ATP. Asp-517 and Asp-521 together coordinate Mg(2+). The next 3 helical transmembrane spans lie at Phe-587–Met-607, Ala-615–Leu-635, and Leu-661–Val-681.

This sequence belongs to the cation transport ATPase (P-type) (TC 3.A.3) family. Type IA subfamily. As to quaternary structure, the system is composed of three essential subunits: KdpA, KdpB and KdpC.

It localises to the cell membrane. It catalyses the reaction K(+)(out) + ATP + H2O = K(+)(in) + ADP + phosphate + H(+). Its function is as follows. Part of the high-affinity ATP-driven potassium transport (or Kdp) system, which catalyzes the hydrolysis of ATP coupled with the electrogenic transport of potassium into the cytoplasm. This subunit is responsible for energy coupling to the transport system and for the release of the potassium ions to the cytoplasm. The protein is Potassium-transporting ATPase ATP-binding subunit of Listeria monocytogenes serotype 4a (strain HCC23).